The following is a 504-amino-acid chain: MNVFFMFSLLFLAALGSCADDRNPLEECFRETDYEEFLEIARNGLKATSNPKHVVIVGAGMSGLSAAYVLSGAGHQVTVLEASERAGGRVRTYRNDKEGWYANLGPMRLPEKHRIVREYIRKFGLQLNEFSQENDNAWYFIKNIRKRVGEVKKDPGVLKYPVKPSEEGKSAGQLYEESLGKVVEELKRTNCSYILNKYDTYSTKEYLLKEGNLSPGAVDMIGDLMNEDSGYYVSFPESLRHDDIFAYEKRFDEIVGGMDKLPTSMYRAIEEKVHLNAQVIKIQKNAEKVTVVYQTPAKEMASVTADYVIVCTTSRATRRIKFEPPLPPKKAHALRSVHYRSGTKIFLTCTKKFWEDEGIHGGKSTTDLPSRFIYYPNHNFTSGVGVIIAYGIGDDANFFQALDFKDCADIVINDLSLIHQLPREEIQTFCYPSMIQKWSLDKYAMGGITTFTPYQFQHFSEPLTASVDRIYFAGEHTAEAHGWIDSTIKSGLRAARDVNRASEQ.

The first 18 residues, 1-18 (MNVFFMFSLLFLAALGSC), serve as a signal peptide directing secretion. Residues C28 and C191 are joined by a disulfide bond. FAD-binding positions include 61 to 62 (MS), 81 to 82 (EA), R89, and 105 to 108 (GPMR). Residue R108 coordinates substrate. N190 is a glycosylation site (N-linked (GlcNAc...) asparagine). H241 contributes to the substrate binding site. Residue V279 coordinates FAD. C349 and C430 are oxidised to a cystine. N-linked (GlcNAc...) asparagine glycosylation occurs at N379. Position 390 (Y390) interacts with substrate. Residues E475 and 482-487 (GWIDST) contribute to the FAD site. Substrate is bound at residue 482–483 (GW).

The protein belongs to the flavin monoamine oxidase family. FIG1 subfamily. As to quaternary structure, homodimer; non-covalently linked. FAD serves as cofactor. Expressed by the venom gland.

The protein resides in the secreted. The catalysed reaction is an L-alpha-amino acid + O2 + H2O = a 2-oxocarboxylate + H2O2 + NH4(+). It carries out the reaction L-leucine + O2 + H2O = 4-methyl-2-oxopentanoate + H2O2 + NH4(+). In terms of biological role, catalyzes an oxidative deamination of predominantly hydrophobic and aromatic L-amino acids, thus producing hydrogen peroxide that may contribute to the diverse toxic effects of this enzyme. Shows activity on L-Leu. Exhibits diverse biological activities, such as apoptosis, and inhibition of agonist- and shear stress-induced platelet aggregation (SIPA). Effects of snake L-amino oxidases on platelets are controversial, since they either induce aggregation or inhibit agonist-induced aggregation. These different effects are probably due to different experimental conditions. This protein may also induce hemorrhage, hemolysis, edema, antibacterial and antiparasitic activities. The chain is L-amino-acid oxidase from Gloydius blomhoffii (Mamushi).